A 218-amino-acid chain; its full sequence is Ras-related protein Rab-11B (218 aa).

At glycine 2 the chain carries N-acetylglycine. Residues serine 20, glycine 21, glycine 23, lysine 24, serine 25, asparagine 26, asparagine 37, leucine 38, serine 40, serine 42, and threonine 43 each contribute to the GTP site. Residue serine 25 coordinates Mg(2+). The Switch 1 motif lies at 36 to 47; it reads FNLESKSTIGVE. 2 residues coordinate Mg(2+): threonine 43 and aspartate 66. Residues 67–86 carry the Switch 2 motif; that stretch reads TAGQERYRAITSAYYRGAVG. Glycine 69, asparagine 124, lysine 125, aspartate 127, alanine 155, and leucine 156 together coordinate GTP. The disordered stretch occupies residues 183–218; that stretch reads DRSAHDESPGNNVVDISVPPTTDGQKSNKLQCCQNM. Polar residues predominate over residues 201-218; the sequence is PPTTDGQKSNKLQCCQNM. 2 S-geranylgeranyl cysteine lipidation sites follow: cysteine 214 and cysteine 215. Residue cysteine 215 is modified to Cysteine methyl ester. Positions 216–218 are cleaved as a propeptide — removed in mature form; sequence QNM.

It belongs to the small GTPase superfamily. Rab family. The cofactor is Mg(2+).

Its subcellular location is the recycling endosome membrane. It is found in the cytoplasmic vesicle. The protein localises to the secretory vesicle. The protein resides in the synaptic vesicle membrane. It localises to the phagosome membrane. It catalyses the reaction GTP + H2O = GDP + phosphate + H(+). Regulated by guanine nucleotide exchange factors (GEFs) which promote the exchange of bound GDP for free GTP. Regulated by GTPase activating proteins (GAPs) which increase the GTP hydrolysis activity. Inhibited by GDP dissociation inhibitors (GDIs) which prevent Rab-GDP dissociation. The small GTPases Rab are key regulators of intracellular membrane trafficking, from the formation of transport vesicles to their fusion with membranes. Rabs cycle between an inactive GDP-bound form and an active GTP-bound form that is able to recruit to membranes different set of downstream effectors directly responsible for vesicle formation, movement, tethering and fusion. That Rab plays a role in endocytic recycling, regulating apical recycling of several transmembrane proteins including cystic fibrosis transmembrane conductance regulator/CFTR, epithelial sodium channel/ENaC, potassium voltage-gated channel, and voltage-dependent L-type calcium channel. May also regulate constitutive and regulated secretion, like insulin granule exocytosis. Required for melanosome transport and release from melanocytes. Also regulates V-ATPase intracellular transport in response to extracellular acidosis. In Diplobatis ommata (Ocellated electric ray), this protein is Ras-related protein Rab-11B.